The chain runs to 371 residues: Antibiotic efflux pump periplasmic linker protein ArpA (371 aa).

Residues 1 to 22 (MQFKPAVTALVSAVALATLLSG) form the signal peptide. The N-palmitoyl cysteine moiety is linked to residue Cys-23. A lipid anchor (S-diacylglycerol cysteine) is attached at Cys-23. The stretch at 115–155 (LAERYKQLIDEQAVSKQEYDDANAKRLQAEASLKSAQIDLR) forms a coiled coil.

Belongs to the membrane fusion protein (MFP) (TC 8.A.1) family.

The protein localises to the cell inner membrane. The periplasmic linker protein component of an antibiotic efflux pump. Confers resistance to numerous structurally unrelated antibiotics such as carbenicillin, chloramphenicol, erythromycin, novobiocin, streptomycin and tetracycline. Is not involved in organic solvent efflux. This chain is Antibiotic efflux pump periplasmic linker protein ArpA (arpA), found in Pseudomonas putida (Arthrobacter siderocapsulatus).